We begin with the raw amino-acid sequence, 281 residues long: Arylamine N-acetyltransferase (281 aa).

Residue Cys-69 is the Acyl-thioester intermediate of the active site. Active-site residues include His-107 and Asp-122. Lys-214 and Lys-281 each carry N6-acetyllysine.

This sequence belongs to the arylamine N-acetyltransferase family. Homodimer. Acetylated on Lys-214 and Lys-281. Deacetylated by CobB.

It localises to the cytoplasm. The enzyme catalyses an arylamine + acetyl-CoA = an N-acetylarylamine + CoA. It carries out the reaction an N-hydroxyarylamine + acetyl-CoA = an N-acetoxyarylamine + CoA. Its activity is regulated as follows. Inhibited by salicylic acid, acetylsalicylic acid, 2,6-dichrolo-4-nitrophenol, N-ethylmaleimide and iodoacetamide. In terms of biological role, catalyzes the acetyl-CoA-dependent N-acetylation of aromatic amines, and, probably, the O-acetylation of N-hydroxyarylamines. In vitro, catalyzes the N-acetylation of various arylamines such as aminobenzoic acid, aminophenol, aminotoluene, phenetidine, anisidine, aniline, isoniazid and 2-amino-fluorene. N-hydroxyarylamine O-acetyltransferase activity has not been assayed directly, however, NhoA activity is required for the mutagenicity of nitroaromatic compounds, suggesting that it also has O-acetyltransferase activity. The polypeptide is Arylamine N-acetyltransferase (nhoA) (Escherichia coli (strain K12)).